Reading from the N-terminus, the 490-residue chain is MATENPTRVATATPEATGADVVTRFAPSPTGYLHIGGARTALFNWLFARHHGGKFLLRIEDTDRARSTDAAIDAILDGMRWLELDWDGETVFQFARAPRHAEVAHDLLARGGAYRCYLTQDELAAMRAEAQEKRQPFRVRSPWRDRDDGDPAAPHVLRLRAPQDGAVTIADKVQGEVTVQNAELDDFILLRSDGTPTYMLSVVVDDNDMGVTHVIRGDDHLNNAFRQLALIRAMDWREPVYAHVPLIHGADGTKLSKRHGALGVDAYRDAMGYLPEAVNNYLLRLGWGHGDDEIISRAQAIEWFDLDHVGRSPSRFDFKKLENLNGHYLREADDARLAGLVAPRIEALVGRALDNADRDLLTQAMAALKPRAKTLGEIAEGATFLFAPDPMPVDEKAAEVLASAPEGLLAAMTQRLRGLDDDHWTSEDLEAAVRAEAEAAELGLGKLAQPLRAALTGRTVSPGIFDVLLLLGRKVSLARLDAAQHYPAGA.

The short motif at 27-37 (PSPTGYLHIGG) is the 'HIGH' region element. Positions 254 to 258 (KLSKR) match the 'KMSKS' region motif. Position 257 (Lys257) interacts with ATP.

This sequence belongs to the class-I aminoacyl-tRNA synthetase family. Glutamate--tRNA ligase type 1 subfamily. In terms of assembly, monomer.

The protein localises to the cytoplasm. The enzyme catalyses tRNA(Glu) + L-glutamate + ATP = L-glutamyl-tRNA(Glu) + AMP + diphosphate. Its function is as follows. Catalyzes the attachment of glutamate to tRNA(Glu) in a two-step reaction: glutamate is first activated by ATP to form Glu-AMP and then transferred to the acceptor end of tRNA(Glu). In Sphingopyxis alaskensis (strain DSM 13593 / LMG 18877 / RB2256) (Sphingomonas alaskensis), this protein is Glutamate--tRNA ligase 1.